The chain runs to 300 residues: Formyltetrahydrofolate deformylase (300 aa).

Positions 21-102 (RLLVSCPDQP…MTWSLTLASE (82 aa)) constitute an ACT domain. Aspartate 244 is an active-site residue.

It belongs to the PurU family.

The enzyme catalyses (6R)-10-formyltetrahydrofolate + H2O = (6S)-5,6,7,8-tetrahydrofolate + formate + H(+). It participates in purine metabolism; IMP biosynthesis via de novo pathway; formate from 10-formyl-5,6,7,8-tetrahydrofolate: step 1/1. Its function is as follows. Catalyzes the hydrolysis of 10-formyltetrahydrofolate (formyl-FH4) to formate and tetrahydrofolate (FH4). This is Formyltetrahydrofolate deformylase from Bacillus subtilis (strain 168).